The chain runs to 261 residues: 3-methyl-2-oxobutanoate hydroxymethyltransferase (261 aa).

Residues Asp-47 and Asp-86 each contribute to the Mg(2+) site. 3-methyl-2-oxobutanoate is bound by residues 47–48 (DS), Asp-86, and Lys-116. Glu-118 serves as a coordination point for Mg(2+). Catalysis depends on Glu-186, which acts as the Proton acceptor.

It belongs to the PanB family. As to quaternary structure, homodecamer; pentamer of dimers. The cofactor is Mg(2+).

The protein resides in the cytoplasm. It carries out the reaction 3-methyl-2-oxobutanoate + (6R)-5,10-methylene-5,6,7,8-tetrahydrofolate + H2O = 2-dehydropantoate + (6S)-5,6,7,8-tetrahydrofolate. It participates in cofactor biosynthesis; (R)-pantothenate biosynthesis; (R)-pantoate from 3-methyl-2-oxobutanoate: step 1/2. Functionally, catalyzes the reversible reaction in which hydroxymethyl group from 5,10-methylenetetrahydrofolate is transferred onto alpha-ketoisovalerate to form ketopantoate. This Thermosynechococcus vestitus (strain NIES-2133 / IAM M-273 / BP-1) protein is 3-methyl-2-oxobutanoate hydroxymethyltransferase.